Here is a 316-residue protein sequence, read N- to C-terminus: Ribosomal RNA small subunit methyltransferase H (316 aa).

Residues 35 to 37, D55, F79, D101, and Q108 contribute to the S-adenosyl-L-methionine site; that span reads GGH. Positions 291–316 are disordered; it reads AIKPSKDEVDENTRSRSSVLRIAEKL. The span at 294-304 shows a compositional bias: basic and acidic residues; it reads PSKDEVDENTR.

Belongs to the methyltransferase superfamily. RsmH family.

The protein resides in the cytoplasm. The catalysed reaction is cytidine(1402) in 16S rRNA + S-adenosyl-L-methionine = N(4)-methylcytidine(1402) in 16S rRNA + S-adenosyl-L-homocysteine + H(+). Specifically methylates the N4 position of cytidine in position 1402 (C1402) of 16S rRNA. The protein is Ribosomal RNA small subunit methyltransferase H of Vibrio atlanticus (strain LGP32) (Vibrio splendidus (strain Mel32)).